The primary structure comprises 352 residues: Probable transcription factor At1g11510 (352 aa).

2 disordered regions span residues 1-132 (MSRR…GGEE) and 239-269 (MKSN…KNNC). Positions 56 to 66 (SGSDEETDSDS) are enriched in acidic residues. Composition is skewed to basic and acidic residues over residues 89–101 (KTSE…RSLE), 117–132 (VSGE…GGEE), and 241–259 (SNEK…HELD).

It belongs to the GeBP family.

This is Probable transcription factor At1g11510 from Arabidopsis thaliana (Mouse-ear cress).